A 312-amino-acid chain; its full sequence is Methionyl-tRNA formyltransferase (312 aa).

109–112 (SLLP) is a binding site for (6S)-5,6,7,8-tetrahydrofolate.

Belongs to the Fmt family.

It catalyses the reaction L-methionyl-tRNA(fMet) + (6R)-10-formyltetrahydrofolate = N-formyl-L-methionyl-tRNA(fMet) + (6S)-5,6,7,8-tetrahydrofolate + H(+). Functionally, attaches a formyl group to the free amino group of methionyl-tRNA(fMet). The formyl group appears to play a dual role in the initiator identity of N-formylmethionyl-tRNA by promoting its recognition by IF2 and preventing the misappropriation of this tRNA by the elongation apparatus. The protein is Methionyl-tRNA formyltransferase of Ruminiclostridium cellulolyticum (strain ATCC 35319 / DSM 5812 / JCM 6584 / H10) (Clostridium cellulolyticum).